Reading from the N-terminus, the 194-residue chain is Thymidine kinase (194 aa).

ATP is bound by residues 15 to 22 (GSMFSGKS) and 88 to 91 (DEVQ). Glu-89 acts as the Proton acceptor in catalysis. Residues Cys-145, Cys-148, Cys-183, and Cys-186 each coordinate Zn(2+).

This sequence belongs to the thymidine kinase family. In terms of assembly, homotetramer.

The protein localises to the cytoplasm. It catalyses the reaction thymidine + ATP = dTMP + ADP + H(+). The chain is Thymidine kinase from Bacillus cereus (strain AH820).